We begin with the raw amino-acid sequence, 209 residues long: Imidazole glycerol phosphate synthase subunit HisH (209 aa).

Residues 1-205 (MIAIIDYGMG…QGVVEAWKSS (205 aa)) enclose the Glutamine amidotransferase type-1 domain. C79 serves as the catalytic Nucleophile. Active-site residues include H180 and E182.

In terms of assembly, heterodimer of HisH and HisF.

Its subcellular location is the cytoplasm. It carries out the reaction 5-[(5-phospho-1-deoxy-D-ribulos-1-ylimino)methylamino]-1-(5-phospho-beta-D-ribosyl)imidazole-4-carboxamide + L-glutamine = D-erythro-1-(imidazol-4-yl)glycerol 3-phosphate + 5-amino-1-(5-phospho-beta-D-ribosyl)imidazole-4-carboxamide + L-glutamate + H(+). The enzyme catalyses L-glutamine + H2O = L-glutamate + NH4(+). The protein operates within amino-acid biosynthesis; L-histidine biosynthesis; L-histidine from 5-phospho-alpha-D-ribose 1-diphosphate: step 5/9. Functionally, IGPS catalyzes the conversion of PRFAR and glutamine to IGP, AICAR and glutamate. The HisH subunit catalyzes the hydrolysis of glutamine to glutamate and ammonia as part of the synthesis of IGP and AICAR. The resulting ammonia molecule is channeled to the active site of HisF. This Bacillus cereus (strain ATCC 14579 / DSM 31 / CCUG 7414 / JCM 2152 / NBRC 15305 / NCIMB 9373 / NCTC 2599 / NRRL B-3711) protein is Imidazole glycerol phosphate synthase subunit HisH.